A 203-amino-acid chain; its full sequence is V-type ATP synthase subunit D (203 aa).

This sequence belongs to the V-ATPase D subunit family.

Its function is as follows. Produces ATP from ADP in the presence of a proton gradient across the membrane. The chain is V-type ATP synthase subunit D from Streptococcus pneumoniae (strain CGSP14).